Consider the following 314-residue polypeptide: MRIPLVGKDSIESKDIGFTLIHEHLRVFSEAVRQQWPHLYNEDEEFRNAVNEVKRAMQFGVKTIVDPTVMGLGRDIRFMEKVVKATGINLVAGTGIYIYIDLPFYFLNRSIDEIADLFIHDIKEGIQGTLNKAGFVKIAADEPGITKDVEKVIRAAAIANKETKVPIITHSNAHNNTGLEQQRILTEEGVDPGKILIGHLGDTDNIDYIKKIADKGSFIGLDRYGLDLFLPVDKRNETTLRLIKDGYSDKIMISHDYCCTIDWGTAKPEYKPKLAPRWSITLIFEDTIPFLKRNGVNEEVIATIFKENPKKFFS.

Fe cation is bound by residues His-22, His-24, and Lys-137. The Co(2+) site is built by Lys-137, His-170, and His-199. Position 137 is an N6-carboxylysine (Lys-137). Asp-256 provides a ligand contact to Fe cation.

The protein belongs to the metallo-dependent hydrolases superfamily. Phosphotriesterase family. In terms of assembly, homodimer. Co(2+) serves as cofactor. The cofactor is Fe cation.

It carries out the reaction An aryl dialkyl phosphate + H2O = dialkyl phosphate + an aryl alcohol.. Inactivated by EDTA and o-phenanthroline. Has a low paraoxonase activity. Also active, but with a lower activity, against other organo-phosphorus insecticides such as Dursban, Coumaphos, pNP-butanoate or parathion. The sequence is that of Aryldialkylphosphatase (php) from Saccharolobus solfataricus (strain ATCC 35092 / DSM 1617 / JCM 11322 / P2) (Sulfolobus solfataricus).